The following is a 264-amino-acid chain: Glutamate racemase (264 aa).

Substrate contacts are provided by residues 10–11 and 42–43; these read DS and YG. Residue Cys73 is the Proton donor/acceptor of the active site. 74-75 is a substrate binding site; sequence NT. Cys183 serves as the catalytic Proton donor/acceptor. 184 to 185 serves as a coordination point for substrate; it reads TH.

The protein belongs to the aspartate/glutamate racemases family. In terms of assembly, homodimer.

It catalyses the reaction L-glutamate = D-glutamate. Its pathway is cell wall biogenesis; peptidoglycan biosynthesis. Its function is as follows. Provides the (R)-glutamate required for cell wall biosynthesis. In Streptococcus pyogenes serotype M1, this protein is Glutamate racemase.